Here is a 433-residue protein sequence, read N- to C-terminus: Glycerol-3-phosphate dehydrogenase [NAD(+)] (433 aa).

NAD(+) contacts are provided by residues 17-22, Phe-49, and Phe-117; that span reads GSGNWG. Residue Lys-140 coordinates substrate. Ala-173 is a binding site for NAD(+). Residues 187–246 are disordered; sequence IAYDPPPIDSSRAATPRDRSPNYDSTSANKLPDLTVTSADSNGKDDRGRRTKAKLTPVPE. Over residues 208–227 the composition is skewed to polar residues; sequence NYDSTSANKLPDLTVTSADS. Lys-283 serves as the catalytic Proton acceptor. Arg-349 and Gln-378 together coordinate NAD(+). 349–350 is a substrate binding site; it reads RN.

Belongs to the NAD-dependent glycerol-3-phosphate dehydrogenase family.

It carries out the reaction sn-glycerol 3-phosphate + NAD(+) = dihydroxyacetone phosphate + NADH + H(+). This Pyricularia oryzae (strain Y34) (Rice blast fungus) protein is Glycerol-3-phosphate dehydrogenase [NAD(+)].